A 490-amino-acid chain; its full sequence is Cytochrome P450 90D2 (490 aa).

The helical transmembrane segment at 4-24 (AAAGWAAPAFAVAAVVIWVVL) threads the bilayer. Position 437 (Cys437) interacts with heme.

It belongs to the cytochrome P450 family. The cofactor is heme.

It localises to the membrane. The catalysed reaction is 6-deoxoteasterone + reduced [NADPH--hemoprotein reductase] + O2 = 3-dehydro-6-deoxoteasterone + oxidized [NADPH--hemoprotein reductase] + 2 H2O + H(+). The protein operates within plant hormone biosynthesis; brassinosteroid biosynthesis. Functionally, catalyzes the C6-oxidation step in brassinosteroids biosynthesis. May convert 6-deoxoteasterone (6-deoxoTE) to 3-dehydro-6-deoxoteasterone (6-deoxo3DT, 6-deoxo3DHT), and teasterone (TE) to 3-dehydroteasterone (3DT, 3-DHT). Involved in the elongation of leaf sheaths and stems. The sequence is that of Cytochrome P450 90D2 from Oryza sativa subsp. indica (Rice).